Consider the following 388-residue polypeptide: Arginine biosynthesis bifunctional protein ArgJ (388 aa).

Residues T150, K172, T183, E263, N383, and S388 each contribute to the substrate site. Catalysis depends on T183, which acts as the Nucleophile.

This sequence belongs to the ArgJ family. Heterotetramer of two alpha and two beta chains.

The protein localises to the cytoplasm. The enzyme catalyses N(2)-acetyl-L-ornithine + L-glutamate = N-acetyl-L-glutamate + L-ornithine. It carries out the reaction L-glutamate + acetyl-CoA = N-acetyl-L-glutamate + CoA + H(+). The protein operates within amino-acid biosynthesis; L-arginine biosynthesis; L-ornithine and N-acetyl-L-glutamate from L-glutamate and N(2)-acetyl-L-ornithine (cyclic): step 1/1. It participates in amino-acid biosynthesis; L-arginine biosynthesis; N(2)-acetyl-L-ornithine from L-glutamate: step 1/4. Its function is as follows. Catalyzes two activities which are involved in the cyclic version of arginine biosynthesis: the synthesis of N-acetylglutamate from glutamate and acetyl-CoA as the acetyl donor, and of ornithine by transacetylation between N(2)-acetylornithine and glutamate. This Corynebacterium glutamicum (strain ATCC 13032 / DSM 20300 / JCM 1318 / BCRC 11384 / CCUG 27702 / LMG 3730 / NBRC 12168 / NCIMB 10025 / NRRL B-2784 / 534) protein is Arginine biosynthesis bifunctional protein ArgJ.